The primary structure comprises 253 residues: Phosphoribosylaminoimidazole-succinocarboxamide synthase (253 aa).

Belongs to the SAICAR synthetase family.

It carries out the reaction 5-amino-1-(5-phospho-D-ribosyl)imidazole-4-carboxylate + L-aspartate + ATP = (2S)-2-[5-amino-1-(5-phospho-beta-D-ribosyl)imidazole-4-carboxamido]succinate + ADP + phosphate + 2 H(+). Its pathway is purine metabolism; IMP biosynthesis via de novo pathway; 5-amino-1-(5-phospho-D-ribosyl)imidazole-4-carboxamide from 5-amino-1-(5-phospho-D-ribosyl)imidazole-4-carboxylate: step 1/2. This chain is Phosphoribosylaminoimidazole-succinocarboxamide synthase, found in Parvibaculum lavamentivorans (strain DS-1 / DSM 13023 / NCIMB 13966).